We begin with the raw amino-acid sequence, 217 residues long: Small ribosomal subunit protein uS3 (217 aa).

The KH type-2 domain maps to 38 to 106 (IRKFIDNELK…KVHINVIEIK (69 aa)).

Belongs to the universal ribosomal protein uS3 family. In terms of assembly, part of the 30S ribosomal subunit. Forms a tight complex with proteins S10 and S14.

Functionally, binds the lower part of the 30S subunit head. Binds mRNA in the 70S ribosome, positioning it for translation. The protein is Small ribosomal subunit protein uS3 of Staphylococcus haemolyticus (strain JCSC1435).